Reading from the N-terminus, the 344-residue chain is Interactor of constitutive active ROPs 1 (344 aa).

Disordered stretches follow at residues 1-74 (MPRP…ESQL), 92-139 (EAVK…KETD), 186-218 (HESLGKENESLKNQLSDSASEISNVKANEDEMV), and 307-344 (FMDPPGMADDYDDGLGSGKRKSSGMKMFGELWRKKGQK). Residues 19-29 (SSSSTSDSNHS) are compositionally biased toward low complexity. Residues 60-108 (QKKLGGRISDLESQLGQAQEELRLLKEQLANAEAVKKQAQDELHKKSKK) are a coiled coil. 3 stretches are compositionally biased toward basic and acidic residues: residues 93–103 (AVKKQAQDELH), 114–139 (RVEESATEAERIDRDEIPGDVQKETD), and 186–195 (HESLGKENES). Residues 145–273 (VEKIAVEEEE…EQWRKAADAA (129 aa)) adopt a coiled-coil conformation. The segment covering 196–211 (LKNQLSDSASEISNVK) has biased composition (polar residues).

The protein belongs to the ICR family. In terms of assembly, homooligomer. Interacts with ARAC3, ARAC4, ARAC8, ARAC11 and SEC3A, but not with ICR2 or EXO70A1. As to expression, expressed in mature and germinating pollen. Expressed throughout the embryo but not in the hypophysis and quiescent center (QC). In roots, absent from the QC and the stem cells.

The protein localises to the cell membrane. The protein resides in the nucleus. Functionally, acts as a scaffold, mediating interaction of ROPs with different proteins. Required for primary and adventitious root maintenance, but not for their formation. Promotes the stabilization of ARAC11 on the plasma membrane of the pollen tube initiation site but not the activation of ARAC11. Regulates directionality of polar auxin transport, and is required for the formation of a stable auxin maximum and tip localized auxin gradient during embryogenesis, organogenesis, and meristem activity. Involved in exocytosis and in the recycling of PIN proteins back to the plasma membrane. The chain is Interactor of constitutive active ROPs 1 (ICR1) from Arabidopsis thaliana (Mouse-ear cress).